Reading from the N-terminus, the 248-residue chain is Superoxide dismutase [Mn] 1 (248 aa).

Residues 1–41 form the signal peptide; sequence MQTTFRRILILFVGLLVPLFFACQSNSQVDAAPSAAPQLSA. H68, H123, D208, and H212 together coordinate Mn(2+).

Belongs to the iron/manganese superoxide dismutase family. In terms of assembly, homodimer. The cofactor is Mn(2+).

It carries out the reaction 2 superoxide + 2 H(+) = H2O2 + O2. Its function is as follows. Destroys superoxide anion radicals which are normally produced within the cells and which are toxic to biological systems. This Leptolyngbya boryana (Plectonema boryanum) protein is Superoxide dismutase [Mn] 1 (sodA1).